A 295-amino-acid chain; its full sequence is MSLRAVPGYFAAYPSEGFQGLDSTKYDHLELINHKNWKELYHAIPRNTKNRHYKLLILARHGQGYHNAAILRYGMEKWDAYWSLLSGDEHGEWLDSKLTPLGKDQVRRTGSNVLLPMAKQLGMLPHVFFSSPMRRCLETFIESWTPVLAETQELPAGTKISTRIIEGLRETLGSHTCDKRVAHSMAVDEYQDFSTESGHTVHWQYVPDYPEDDELWLPDHRETCAEMDKRTLNGLFELFNQLSSEEKFISLTCHSGVIQSVLRNLQHPPIYNLDTGKVVAVVVEVPVNTADRGRL.

The Tele-phosphohistidine intermediate role is filled by His-61. The active-site Proton donor/acceptor is Glu-170.

It belongs to the phosphoglycerate mutase family.

It localises to the cytoplasm. The protein localises to the nucleus. Functionally, probable phosphomutase that may have a function related to the manipulation of phosphate groups on carbohydrates. Reduces trehalose-6-phosphate levels when overexpressed in TPS2-deleted cells. Reduces 5'-Phosphoribosyl-4-carboxamide-5-aminoimidazole (AICAR) levels, a metabolic intermediate at the crossroads between AMP and histidine biosynthesis pathways, when overexpressed in a ADE3-ADE16-ADE17 triple deletant. The sequence is that of Probable phosphoglycerate mutase PMU1 from Saccharomyces cerevisiae (strain ATCC 204508 / S288c) (Baker's yeast).